The sequence spans 484 residues: Calcium-dependent protein kinase 26 (484 aa).

The 259-residue stretch at 24-282 (YSLGHKLGQG…AHQVLRHPWI (259 aa)) folds into the Protein kinase domain. ATP is bound by residues 30–38 (LGQGQFGTT) and Lys-53. Asp-148 functions as the Proton acceptor in the catalytic mechanism. Ser-188 bears the Phosphoserine mark. The autoinhibitory domain stretch occupies residues 288 to 318 (APDRALDPAVLSRLKQFSAMNKLKQMALRVI). 4 EF-hand domains span residues 325–360 (EEIAGLKEMFKAMDTDNSGAITFDELKAGLRRYGST), 361–396 (LKDTEIRDLMEAADIDKSGTIDYGEFIAATIHLNKL), 397–432 (EREEHLLSAFRYFDKDGSGYITIDELQHACAEQGMS), and 436–466 (LEDVIKEVDQDNDGRIDYGEFVAMMQKGIVG). Residues Asp-338, Asp-340, Ser-342, Glu-349, Asp-374, Asp-376, Ser-378, Thr-380, Glu-385, Asp-410, Asp-412, Ser-414, Tyr-416, Glu-421, Asp-444, Asp-446, Asp-448, Arg-450, and Glu-455 each coordinate Ca(2+).

The protein belongs to the protein kinase superfamily. Ser/Thr protein kinase family. CDPK subfamily.

It carries out the reaction L-seryl-[protein] + ATP = O-phospho-L-seryl-[protein] + ADP + H(+). The catalysed reaction is L-threonyl-[protein] + ATP = O-phospho-L-threonyl-[protein] + ADP + H(+). Its activity is regulated as follows. Activated by calcium. Autophosphorylation may play an important role in the regulation of the kinase activity. Its function is as follows. May play a role in signal transduction pathways that involve calcium as a second messenger. In Arabidopsis thaliana (Mouse-ear cress), this protein is Calcium-dependent protein kinase 26 (CPK26).